Consider the following 136-residue polypeptide: Orexigenic neuropeptide QRFP (136 aa).

An N-terminal signal peptide occupies residues 1–18; it reads MVRPYPLIYFLFLPLGAC. Positions 19–90 are excised as a propeptide; the sequence is FPLLDRREPT…HAGCRFRFGR (72 aa). At Q91 the chain carries Pyrrolidone carboxylic acid. F133 carries the phenylalanine amide modification.

Belongs to the RFamide neuropeptide family. As to quaternary structure, ligand for the G-protein coupled receptor QRFPR/GPR103. In terms of tissue distribution, expressed widely in the brain with highest expression levels in the cerebellum, medulla, pituitary, retina, vestibular nucleus, and white matter. Also expressed in the bladder, colon, coronary artery, parathyroid gland, prostate, testis, and thyroid.

The protein localises to the secreted. Its function is as follows. Stimulates feeding behavior, metabolic rate and locomotor activity and increases blood pressure. May have orexigenic activity. May promote aldosterone secretion by the adrenal gland. This is Orexigenic neuropeptide QRFP from Homo sapiens (Human).